A 71-amino-acid polypeptide reads, in one-letter code: VLIIAVLFLTASELVTADYTRDKWQYRAASLRDAMRNFRDTRCSPGGEVCTRHSPCCTGFLCNHIGGMCHH.

An N-terminal signal peptide occupies residues 1–17; sequence VLIIAVLFLTASELVTA. The propeptide occupies 18-41; it reads DYTRDKWQYRAASLRDAMRNFRDT. 3 disulfide bridges follow: Cys43/Cys57, Cys50/Cys62, and Cys56/Cys69.

Belongs to the conotoxin O1 superfamily. In terms of tissue distribution, expressed by the venom duct.

It localises to the secreted. The protein is Conotoxin LvVIB of Conus lividus (Livid cone).